The chain runs to 179 residues: Fas apoptotic inhibitory molecule 1 (179 aa).

Thr2 carries the N-acetylthreonine modification.

It belongs to the FAIM1 family.

The protein localises to the cytoplasm. Plays a role as an inducible effector molecule that mediates Fas resistance produced by surface Ig engagement in B cells. The chain is Fas apoptotic inhibitory molecule 1 (FAIM) from Homo sapiens (Human).